Consider the following 98-residue polypeptide: Nuclear protein 2 (98 aa).

Residues 1–11 (MEPAAPTVQPR) are compositionally biased toward low complexity. Disordered regions lie at residues 1-24 (MEPA…PPVG) and 78-98 (LNSQ…TRLT). A compositionally biased stretch (basic residues) spans 81–98 (QRKRRQRQLQPRPRTRLT).

This sequence belongs to the NUPR family.

It localises to the nucleus. Its function is as follows. Acts as a transcriptional repressor by inhibiting gene expression at the NUPR1 promoter in a p53/TP53-dependent manner in cancer cells. Involved in the G1 cell cycle arrest, and in a decrease in cell viability and cell proliferation. Plays a role as a negative regulator of the protumoral factor NUPR1. This chain is Nuclear protein 2, found in Bos taurus (Bovine).